The following is a 608-amino-acid chain: Aspartate--tRNA(Asp/Asn) ligase (608 aa).

Residue E175 coordinates L-aspartate. Residues 199–202 (QLFK) form an aspartate region. R221 lines the L-aspartate pocket. Residues 221-223 (RDE) and Q230 each bind ATP. H453 contributes to the L-aspartate binding site. E487 contributes to the ATP binding site. R494 serves as a coordination point for L-aspartate. Residue 539 to 542 (GWDR) coordinates ATP. Positions 566–608 (IDPLTDAPAAITPQQRKEAGIDAKPKPKAEAQAEAQAEESAEK) are disordered. The span at 580–596 (QRKEAGIDAKPKPKAEA) shows a compositional bias: basic and acidic residues.

The protein belongs to the class-II aminoacyl-tRNA synthetase family. Type 1 subfamily. Homodimer.

It is found in the cytoplasm. It carries out the reaction tRNA(Asx) + L-aspartate + ATP = L-aspartyl-tRNA(Asx) + AMP + diphosphate. Functionally, aspartyl-tRNA synthetase with relaxed tRNA specificity since it is able to aspartylate not only its cognate tRNA(Asp) but also tRNA(Asn). Reaction proceeds in two steps: L-aspartate is first activated by ATP to form Asp-AMP and then transferred to the acceptor end of tRNA(Asp/Asn). This Corynebacterium glutamicum (strain ATCC 13032 / DSM 20300 / JCM 1318 / BCRC 11384 / CCUG 27702 / LMG 3730 / NBRC 12168 / NCIMB 10025 / NRRL B-2784 / 534) protein is Aspartate--tRNA(Asp/Asn) ligase.